Reading from the N-terminus, the 453-residue chain is Tubulin beta-2 chain (453 aa).

Q11, E71, S140, G144, T145, G146, N206, and N228 together coordinate GTP. E71 is a binding site for Mg(2+).

Belongs to the tubulin family. As to quaternary structure, dimer of alpha and beta chains. A typical microtubule is a hollow water-filled tube with an outer diameter of 25 nm and an inner diameter of 15 nM. Alpha-beta heterodimers associate head-to-tail to form protofilaments running lengthwise along the microtubule wall with the beta-tubulin subunit facing the microtubule plus end conferring a structural polarity. Microtubules usually have 13 protofilaments but different protofilament numbers can be found in some organisms and specialized cells. The cofactor is Mg(2+).

The protein localises to the cytoplasm. The protein resides in the cytoskeleton. In terms of biological role, tubulin is the major constituent of microtubules, a cylinder consisting of laterally associated linear protofilaments composed of alpha- and beta-tubulin heterodimers. Microtubules grow by the addition of GTP-tubulin dimers to the microtubule end, where a stabilizing cap forms. Below the cap, tubulin dimers are in GDP-bound state, owing to GTPase activity of alpha-tubulin. The sequence is that of Tubulin beta-2 chain from Geotrichum candidum (Oospora lactis).